A 141-amino-acid chain; its full sequence is Nucleoside diphosphate kinase (141 aa).

ATP is bound by residues K11, F59, R87, T93, R104, and N114. The active-site Pros-phosphohistidine intermediate is H117.

It belongs to the NDK family. In terms of assembly, homotetramer. The cofactor is Mg(2+).

It is found in the cytoplasm. It carries out the reaction a 2'-deoxyribonucleoside 5'-diphosphate + ATP = a 2'-deoxyribonucleoside 5'-triphosphate + ADP. It catalyses the reaction a ribonucleoside 5'-diphosphate + ATP = a ribonucleoside 5'-triphosphate + ADP. Functionally, major role in the synthesis of nucleoside triphosphates other than ATP. The ATP gamma phosphate is transferred to the NDP beta phosphate via a ping-pong mechanism, using a phosphorylated active-site intermediate. This is Nucleoside diphosphate kinase from Vibrio vulnificus (strain CMCP6).